The chain runs to 187 residues: Protein GrpE (187 aa).

Residues 1-31 are disordered; the sequence is MEKKETKNDAEKNNKQDNKSTKSQKKENLNL.

This sequence belongs to the GrpE family. Homodimer.

It is found in the cytoplasm. In terms of biological role, participates actively in the response to hyperosmotic and heat shock by preventing the aggregation of stress-denatured proteins, in association with DnaK and GrpE. It is the nucleotide exchange factor for DnaK and may function as a thermosensor. Unfolded proteins bind initially to DnaJ; upon interaction with the DnaJ-bound protein, DnaK hydrolyzes its bound ATP, resulting in the formation of a stable complex. GrpE releases ADP from DnaK; ATP binding to DnaK triggers the release of the substrate protein, thus completing the reaction cycle. Several rounds of ATP-dependent interactions between DnaJ, DnaK and GrpE are required for fully efficient folding. The polypeptide is Protein GrpE (Borrelia garinii subsp. bavariensis (strain ATCC BAA-2496 / DSM 23469 / PBi) (Borreliella bavariensis)).